We begin with the raw amino-acid sequence, 229 residues long: Protein OPG034 (229 aa).

This sequence belongs to the orthopoxvirus OPG034 family.

This Vaccinia virus (strain Western Reserve) (VACV) protein is Protein OPG034 (OPG034).